The sequence spans 490 residues: tRNA-guanine(15) transglycosylase (490 aa).

Asp-90 functions as the Nucleophile in the catalytic mechanism. The substrate site is built by Asp-125 and Ala-193. Cys-276, Cys-278, and Cys-281 together coordinate Zn(2+).

This sequence belongs to the archaeosine tRNA-ribosyltransferase family. Zn(2+) serves as cofactor.

The catalysed reaction is guanosine(15) in tRNA + 7-cyano-7-deazaguanine = 7-cyano-7-carbaguanosine(15) in tRNA + guanine. Its pathway is tRNA modification; archaeosine-tRNA biosynthesis. Exchanges the guanine residue with 7-cyano-7-deazaguanine (preQ0) at position 15 in the dihydrouridine loop (D-loop) of archaeal tRNAs. The chain is tRNA-guanine(15) transglycosylase from Methanosarcina barkeri (strain Fusaro / DSM 804).